Reading from the N-terminus, the 427-residue chain is 3-phosphoshikimate 1-carboxyvinyltransferase (427 aa).

Residues lysine 20, serine 21, and arginine 25 each contribute to the 3-phosphoshikimate site. Lysine 20 is a phosphoenolpyruvate binding site. Residues glycine 92 and arginine 120 each coordinate phosphoenolpyruvate. 3-phosphoshikimate contacts are provided by serine 166, glutamine 168, aspartate 312, and lysine 339. Residue glutamine 168 coordinates phosphoenolpyruvate. Aspartate 312 acts as the Proton acceptor in catalysis. The phosphoenolpyruvate site is built by arginine 343 and arginine 385.

The protein belongs to the EPSP synthase family. As to quaternary structure, monomer.

The protein resides in the cytoplasm. The catalysed reaction is 3-phosphoshikimate + phosphoenolpyruvate = 5-O-(1-carboxyvinyl)-3-phosphoshikimate + phosphate. It participates in metabolic intermediate biosynthesis; chorismate biosynthesis; chorismate from D-erythrose 4-phosphate and phosphoenolpyruvate: step 6/7. Catalyzes the transfer of the enolpyruvyl moiety of phosphoenolpyruvate (PEP) to the 5-hydroxyl of shikimate-3-phosphate (S3P) to produce enolpyruvyl shikimate-3-phosphate and inorganic phosphate. This Streptococcus pyogenes serotype M4 (strain MGAS10750) protein is 3-phosphoshikimate 1-carboxyvinyltransferase.